The sequence spans 279 residues: Movement protein (279 aa).

It belongs to the cucumovirus movement protein family.

The protein resides in the host cell junction. It localises to the host plasmodesma. Its function is as follows. Transports viral genome to neighboring plant cells directly through plasmosdesmata, without any budding. The movement protein allows efficient cell to cell propagation, by bypassing the host cell wall barrier. Acts by forming a tubular structure at the host plasmodesmata, enlarging it enough to allow free passage of virion capsids. The polypeptide is Movement protein (Cucumber mosaic virus (strain As) (CMV)).